We begin with the raw amino-acid sequence, 453 residues long: uncharacterized protein (453 aa).

The TRAM domain maps to 5 to 63 (LLKKNQSVELTIEDLTHDGSGVGKIDGYPLFIPNALPGEKITAKITKLNKNYGFARMEN). 4 residues coordinate [4Fe-4S] cluster: Cys-76, Cys-82, Cys-85, and Cys-162. Gln-285, Tyr-314, Glu-335, and Asp-383 together coordinate S-adenosyl-L-methionine. Cys-410 functions as the Nucleophile in the catalytic mechanism.

The protein belongs to the class I-like SAM-binding methyltransferase superfamily. RNA M5U methyltransferase family.

This is an uncharacterized protein from Listeria innocua serovar 6a (strain ATCC BAA-680 / CLIP 11262).